A 293-amino-acid chain; its full sequence is Phosphate import ATP-binding protein PstB (293 aa).

An ABC transporter domain is found at 46–288 (FGIRGVDVFY…PDHELTEAYI (243 aa)). 78-85 (GPSGCGKS) serves as a coordination point for ATP.

The protein belongs to the ABC transporter superfamily. Phosphate importer (TC 3.A.1.7) family. As to quaternary structure, the complex is composed of two ATP-binding proteins (PstB), two transmembrane proteins (PstC and PstA) and a solute-binding protein (PstS).

It is found in the cell inner membrane. The catalysed reaction is phosphate(out) + ATP + H2O = ADP + 2 phosphate(in) + H(+). Its function is as follows. Part of the ABC transporter complex PstSACB involved in phosphate import. Responsible for energy coupling to the transport system. This chain is Phosphate import ATP-binding protein PstB, found in Saccharophagus degradans (strain 2-40 / ATCC 43961 / DSM 17024).